Reading from the N-terminus, the 149-residue chain is MRYNERELLSLSRQPAEKAAEILMRVPKKGSVLKKRLVKLVVNFLFYFRTDEAEPIGALLLEHCRITKEEENVFSISFIEEPERKYCFECDSEEQCQEWIEALKRASYEFMRRSLIFYRNEIQKMTGKDPLEQFGISEEARFQLASHKQ.

In terms of domain architecture, PH spans Pro15 to Tyr108.

The sequence is that of Pleckstrin homology domain-containing family J member 1 (PLEKHJ1) from Gallus gallus (Chicken).